Consider the following 489-residue polypeptide: Acetyl-coenzyme A carboxylase carboxyl transferase subunit beta, chloroplastic (489 aa).

In terms of domain architecture, CoA carboxyltransferase N-terminal spans 225 to 489 (LWIQCDNCYG…FFPLNKNEIK (265 aa)). Residues Cys229, Cys232, Cys245, and Cys248 each coordinate Zn(2+). The segment at 229–248 (CDNCYGLKYKKVEMNVCEEC) adopts a C4-type zinc-finger fold.

This sequence belongs to the AccD/PCCB family. Acetyl-CoA carboxylase is a heterohexamer composed of biotin carboxyl carrier protein, biotin carboxylase and 2 subunits each of ACCase subunit alpha and ACCase plastid-coded subunit beta (accD). Requires Zn(2+) as cofactor.

It localises to the plastid. The protein localises to the chloroplast stroma. It carries out the reaction N(6)-carboxybiotinyl-L-lysyl-[protein] + acetyl-CoA = N(6)-biotinyl-L-lysyl-[protein] + malonyl-CoA. It functions in the pathway lipid metabolism; malonyl-CoA biosynthesis; malonyl-CoA from acetyl-CoA: step 1/1. Functionally, component of the acetyl coenzyme A carboxylase (ACC) complex. Biotin carboxylase (BC) catalyzes the carboxylation of biotin on its carrier protein (BCCP) and then the CO(2) group is transferred by the transcarboxylase to acetyl-CoA to form malonyl-CoA. This chain is Acetyl-coenzyme A carboxylase carboxyl transferase subunit beta, chloroplastic, found in Brassica napus (Rape).